A 359-amino-acid polypeptide reads, in one-letter code: Mannose-1-phosphate guanylyltransferase catalytic subunit beta (359 aa).

The substrate-binding domain stretch occupies residues Lys2–Pro221. Asp109 lines the GDP-alpha-D-mannose pocket. Asp109 contacts Mg(2+). The active site involves Lys161. Position 217 (Asp217) interacts with GDP-alpha-D-mannose. Asp217 is a binding site for Mg(2+). The hexapeptide repeat domain stretch occupies residues Ala244–Met359.

The protein belongs to the transferase hexapeptide repeat family. In terms of assembly, component of the GMPPA-GMPPB mannose-1-phosphate guanylyltransferase complex composed of 4 GMPPA subunits and 8 gmppB subunits; the complex is organized into three layers, a central layer made up of 2 gmppA dimers sandwiched between two layers each made up of 2 gmppB dimers. gmppB catalytic activity is reduced when part of the complex and binding of GDP-alpha-D-Mannose by gmppA induces allosteric feedback inhibition of gmppB. Requires Mg(2+) as cofactor.

It catalyses the reaction alpha-D-mannose 1-phosphate + GTP + H(+) = GDP-alpha-D-mannose + diphosphate. Its pathway is nucleotide-sugar biosynthesis; GDP-alpha-D-mannose biosynthesis; GDP-alpha-D-mannose from alpha-D-mannose 1-phosphate (GTP route): step 1/1. With respect to regulation, enzyme activity is reduced by incorporation into the GMPPA-GMPPB mannose-1-phosphate guanylyltransferase complex. Allosterically inhibited, when part of the GMPPA-GMPPB complex, by GDP-alpha-D-mannose binding to GMPPA. Its function is as follows. Catalytic subunit of the GMPPA-GMPPB mannose-1-phosphate guanylyltransferase complex. Catalyzes the formation of GDP-mannose, an essential precursor of glycan moieties of glycoproteins and glycolipids. Can catalyze the reverse reaction in vitro. Together with GMPPA regulates GDP-alpha-D-mannose levels. The protein is Mannose-1-phosphate guanylyltransferase catalytic subunit beta (gmppB) of Dictyostelium discoideum (Social amoeba).